Consider the following 207-residue polypeptide: Segregation and condensation protein B (207 aa).

Belongs to the ScpB family. In terms of assembly, homodimer. Homodimerization may be required to stabilize the binding of ScpA to the Smc head domains. Component of a cohesin-like complex composed of ScpA, ScpB and the Smc homodimer, in which ScpA and ScpB bind to the head domain of Smc. The presence of the three proteins is required for the association of the complex with DNA.

It localises to the cytoplasm. In terms of biological role, participates in chromosomal partition during cell division. May act via the formation of a condensin-like complex containing Smc and ScpA that pull DNA away from mid-cell into both cell halves. This Mycoplasma genitalium (strain ATCC 33530 / DSM 19775 / NCTC 10195 / G37) (Mycoplasmoides genitalium) protein is Segregation and condensation protein B.